The sequence spans 132 residues: Small ribosomal subunit protein uS8 (132 aa).

The protein belongs to the universal ribosomal protein uS8 family. In terms of assembly, part of the 30S ribosomal subunit. Contacts proteins S5 and S12.

Functionally, one of the primary rRNA binding proteins, it binds directly to 16S rRNA central domain where it helps coordinate assembly of the platform of the 30S subunit. This chain is Small ribosomal subunit protein uS8, found in Streptococcus uberis (strain ATCC BAA-854 / 0140J).